The sequence spans 289 residues: Oxaloacetate decarboxylase (289 aa).

Serine 50 provides a ligand contact to substrate. A Mg(2+)-binding site is contributed by aspartate 88. The substrate site is built by arginine 159 and histidine 235.

Belongs to the isocitrate lyase/PEP mutase superfamily. Oxaloacetate decarboxylase family. Homotetramer; dimer of dimers. The cofactor is Mg(2+).

The catalysed reaction is oxaloacetate + H(+) = pyruvate + CO2. Catalyzes the decarboxylation of oxaloacetate into pyruvate. Seems to play a role in maintaining cellular concentrations of bicarbonate and pyruvate. This chain is Oxaloacetate decarboxylase, found in Pseudomonas savastanoi pv. phaseolicola (strain 1448A / Race 6) (Pseudomonas syringae pv. phaseolicola (strain 1448A / Race 6)).